We begin with the raw amino-acid sequence, 388 residues long: NADH-quinone oxidoreductase subunit D 2 (388 aa).

The protein belongs to the complex I 49 kDa subunit family. As to quaternary structure, NDH-1 is composed of 14 different subunits. Subunits NuoB, C, D, E, F, and G constitute the peripheral sector of the complex.

It is found in the cell inner membrane. The enzyme catalyses a quinone + NADH + 5 H(+)(in) = a quinol + NAD(+) + 4 H(+)(out). Functionally, NDH-1 shuttles electrons from NADH, via FMN and iron-sulfur (Fe-S) centers, to quinones in the respiratory chain. The immediate electron acceptor for the enzyme in this species is believed to be ubiquinone. Couples the redox reaction to proton translocation (for every two electrons transferred, four hydrogen ions are translocated across the cytoplasmic membrane), and thus conserves the redox energy in a proton gradient. The sequence is that of NADH-quinone oxidoreductase subunit D 2 from Sorangium cellulosum (strain So ce56) (Polyangium cellulosum (strain So ce56)).